The primary structure comprises 1017 residues: EMILIN-1 (1017 aa).

Positions 1-21 are cleaved as a signal peptide; it reads MAPRALWSCYLCCLLTIATEA. In terms of domain architecture, EMI spans 56–133; the sequence is HRNWCAYVVT…QGYGGDDCGE (78 aa). 3 disulfides stabilise this stretch: cysteine 60–cysteine 123, cysteine 87–cysteine 94, and cysteine 122–cysteine 131. Disordered regions lie at residues 134 to 180 and 259 to 289; these read GPAS…SEKV and ELGH…GPSE. The segment covering 154-167 has biased composition (low complexity); it reads RPNLSGSSAGSHLS. Asparagine 156 carries an N-linked (GlcNAc...) asparagine glycan. Coiled coils occupy residues 171–211, 237–266, and 310–374; these read GEGP…LAED, ETLS…LNNH, and LDGF…DVVT. A disordered region spans residues 383 to 403; the sequence is RRGSELGGAAGQGGHPPGYTS. Positions 387 to 398 are enriched in gly residues; that stretch reads ELGGAAGQGGHP. Asparagine 416, asparagine 456, asparagine 562, and asparagine 659 each carry an N-linked (GlcNAc...) asparagine glycan. Positions 519–573 form a coiled coil; that stretch reads LHEAEAAGEAQQAVLEGLQGLLSRLRERMDAQEETAAEILLRLNLTAAQLSQLEG. Residues 676-697 are a coiled coil; that stretch reads LADLGATKDSIISEINRLQQEA. Asparagine 767 and asparagine 795 each carry an N-linked (GlcNAc...) asparagine glycan. The stretch at 789 to 809 forms a coiled coil; it reads RRLGALNNSLLLLEDRLQQLS. Residues 811–820 are compositionally biased toward low complexity; the sequence is KDFTGPSGKA. Residues 811-866 are disordered; it reads KDFTGPSGKAGPPGPPGLQGPSGPAGPPGPPGKDGQQGAIGPPGPQGEQGAEGAPA. Positions 815–865 constitute a Collagen-like domain; the sequence is GPSGKAGPPGPPGLQGPSGPAGPPGPPGKDGQQGAIGPPGPQGEQGAEGAP. Over residues 822–841 the composition is skewed to pro residues; sequence PPGPPGLQGPSGPAGPPGPP. Low complexity predominate over residues 843–866; it reads KDGQQGAIGPPGPQGEQGAEGAPA. One can recognise a C1q domain in the interval 867–1014; sequence APVPRVAFSA…GALLYEDTEL (148 aa).

In terms of assembly, homotrimer associated through a moderately stable interaction of the C-terminal globular C1q domains, allowing the nucleation of the triple helix and then a further quaternary assembly to higher-order polymers via intermolecular disulfide bonds. Interacts with EMILIN2. Interacts with EFEMP2; this interaction promotes the incorporation of EFEMP2 into the extracellular matrix.

The protein localises to the secreted. The protein resides in the extracellular space. It is found in the extracellular matrix. Functionally, involved in elastic and collagen fibers formation. It is required for EFEMP2 deposition into the extracellular matrix, and collagen network assembly and cross-linking via protein-lysine 6-oxidase/LOX activity. May be responsible for anchoring smooth muscle cells to elastic fibers, and may be involved the processes that regulate vessel assembly. Has cell adhesive capacity. May have a function in placenta formation and initial organogenesis and a later role in interstitial connective tissue. The polypeptide is EMILIN-1 (Emilin1) (Mus musculus (Mouse)).